The following is a 137-amino-acid chain: Large ribosomal subunit protein uL16 (137 aa).

Belongs to the universal ribosomal protein uL16 family. In terms of assembly, part of the 50S ribosomal subunit.

Binds 23S rRNA and is also seen to make contacts with the A and possibly P site tRNAs. This chain is Large ribosomal subunit protein uL16, found in Rhodopseudomonas palustris (strain BisB18).